The primary structure comprises 96 residues: Probable RNA-binding protein YqeI (96 aa).

Positions 1 to 96 constitute a CRM domain; that stretch reads MLTGKQKRFL…SKENKQIELP (96 aa).

This is Probable RNA-binding protein YqeI (yqeI) from Bacillus subtilis (strain 168).